Here is a 120-residue protein sequence, read N- to C-terminus: HTH-type transcriptional regulator NmtR (120 aa).

One can recognise an HTH arsR-type domain in the interval 15-109 (LDSQAAAQVA…EAIYHSEHLH (95 aa)). The segment at residues 49–72 (VTDLAEAIGMEQSAVSHQLRVLRN) is a DNA-binding region (H-T-H motif). Ni(2+)-binding residues include aspartate 91, histidine 93, histidine 104, and histidine 107.

As to quaternary structure, homodimer.

Its activity is regulated as follows. Binding to DNA is inhibited by nickel and, to some extent, cobalt ions. In terms of biological role, represses transcription of ctpJ/nmtA, by binding to its promoter region. The protein is HTH-type transcriptional regulator NmtR (nmtR) of Mycobacterium tuberculosis (strain ATCC 25618 / H37Rv).